A 111-amino-acid chain; its full sequence is Cytochrome c6-like (111 aa).

Residues 1 to 25 form the signal peptide; the sequence is MQKFLKLVLVTFLFLISTLTPPANA. Residues Cys-39, Cys-42, His-43, and Met-83 each contribute to the heme c site.

It belongs to the cytochrome c family. PetJ subfamily. Post-translationally, binds 1 heme c group covalently per subunit.

It is found in the cellular thylakoid lumen. The polypeptide is Cytochrome c6-like (Nostoc sp. (strain PCC 7120 / SAG 25.82 / UTEX 2576)).